We begin with the raw amino-acid sequence, 258 residues long: MSRSIKWRRYLLTLLILIILAAGLIYKLRFSNADALWKIISQQCIPHMTTEDDPRPCAEVNIPAGFAVLKDRNGPLQYLLIPTVPISGIESPQLLTATSPNYFADAWQARYFMAEKYGAPIDDTDISLAINSQYGRTQDQLHIHISCLKPQVKTALAAHSADFQQQWQPLPGGLLGHDYWVRRITATELQQPGPFHLLADEMPGAKEQMGRYGLAITALPSGDFLLLANKASLITQDRASAEELQDHTCQVLPHLPVQ.

A helical transmembrane segment spans residues 10 to 30 (YLLTLLILIILAAGLIYKLRF).

Belongs to the Cdh family.

Its subcellular location is the cell inner membrane. The catalysed reaction is a CDP-1,2-diacyl-sn-glycerol + H2O = a 1,2-diacyl-sn-glycero-3-phosphate + CMP + 2 H(+). It participates in phospholipid metabolism; CDP-diacylglycerol degradation; phosphatidate from CDP-diacylglycerol: step 1/1. This is CDP-diacylglycerol pyrophosphatase (cdh) from Yersinia pestis.